We begin with the raw amino-acid sequence, 182 residues long: ATP synthase subunit b, chloroplastic (182 aa).

The helical transmembrane segment at 33–51 (VLNIAILLSGVIYLGRNFL) threads the bilayer.

This sequence belongs to the ATPase B chain family. In terms of assembly, F-type ATPases have 2 components, F(1) - the catalytic core - and F(0) - the membrane proton channel. F(1) has five subunits: alpha(3), beta(3), gamma(1), delta(1), epsilon(1). F(0) has four main subunits: a(1), b(1), b'(1) and c(10-14). The alpha and beta chains form an alternating ring which encloses part of the gamma chain. F(1) is attached to F(0) by a central stalk formed by the gamma and epsilon chains, while a peripheral stalk is formed by the delta, b and b' chains.

The protein resides in the plastid. It localises to the chloroplast thylakoid membrane. Its function is as follows. F(1)F(0) ATP synthase produces ATP from ADP in the presence of a proton or sodium gradient. F-type ATPases consist of two structural domains, F(1) containing the extramembraneous catalytic core and F(0) containing the membrane proton channel, linked together by a central stalk and a peripheral stalk. During catalysis, ATP synthesis in the catalytic domain of F(1) is coupled via a rotary mechanism of the central stalk subunits to proton translocation. Component of the F(0) channel, it forms part of the peripheral stalk, linking F(1) to F(0). The sequence is that of ATP synthase subunit b, chloroplastic from Guillardia theta (Cryptophyte).